The following is a 1071-amino-acid chain: Carbamoyl phosphate synthase large chain (1071 aa).

The tract at residues 1–399 (MPKREDIKKV…SLLKAFKSLD (399 aa)) is carboxyphosphate synthetic domain. Arg129, Arg169, Gly175, Gly176, Glu208, Val210, Glu215, Gly241, Val242, His243, Gln284, and Glu296 together coordinate ATP. In terms of domain architecture, ATP-grasp 1 spans 133-325 (KETMLRIGEK…IARVTAKIAI (193 aa)). Mg(2+) contacts are provided by Gln284, Glu296, and Asn298. Mn(2+)-binding residues include Gln284, Glu296, and Asn298. Residues 400-540 (IDNQLGNKHW…YSTYEDSCET (141 aa)) form an oligomerization domain region. The interval 541 to 932 (NATTDKKKIL…YKAELAADNV (392 aa)) is carbamoyl phosphate synthetic domain. Positions 673–864 (YILMKELGVP…LAKIAAKVIA (192 aa)) constitute an ATP-grasp 2 domain. Residues Arg709, Asp748, Leu750, Glu755, Gly780, Val781, His782, Ser783, Gln823, and Glu835 each coordinate ATP. Gln823, Glu835, and Asn837 together coordinate Mg(2+). Mn(2+) contacts are provided by Gln823, Glu835, and Asn837. Positions 931–1071 (NVLPLTGKVF…INEYHKEMEN (141 aa)) constitute an MGS-like domain. Residues 933–1071 (LPLTGKVFLS…INEYHKEMEN (139 aa)) are allosteric domain.

The protein belongs to the CarB family. Composed of two chains; the small (or glutamine) chain promotes the hydrolysis of glutamine to ammonia, which is used by the large (or ammonia) chain to synthesize carbamoyl phosphate. Tetramer of heterodimers (alpha,beta)4. The cofactor is Mg(2+). Mn(2+) serves as cofactor.

The catalysed reaction is hydrogencarbonate + L-glutamine + 2 ATP + H2O = carbamoyl phosphate + L-glutamate + 2 ADP + phosphate + 2 H(+). The enzyme catalyses hydrogencarbonate + NH4(+) + 2 ATP = carbamoyl phosphate + 2 ADP + phosphate + 2 H(+). The protein operates within amino-acid biosynthesis; L-arginine biosynthesis; carbamoyl phosphate from bicarbonate: step 1/1. It functions in the pathway pyrimidine metabolism; UMP biosynthesis via de novo pathway; (S)-dihydroorotate from bicarbonate: step 1/3. Functionally, large subunit of the glutamine-dependent carbamoyl phosphate synthetase (CPSase). CPSase catalyzes the formation of carbamoyl phosphate from the ammonia moiety of glutamine, carbonate, and phosphate donated by ATP, constituting the first step of 2 biosynthetic pathways, one leading to arginine and/or urea and the other to pyrimidine nucleotides. The large subunit (synthetase) binds the substrates ammonia (free or transferred from glutamine from the small subunit), hydrogencarbonate and ATP and carries out an ATP-coupled ligase reaction, activating hydrogencarbonate by forming carboxy phosphate which reacts with ammonia to form carbamoyl phosphate. The protein is Carbamoyl phosphate synthase large chain of Methanosarcina barkeri (strain Fusaro / DSM 804).